A 546-amino-acid chain; its full sequence is Chaperonin GroEL 5 (546 aa).

Residues 30–33, Lys-51, 87–91, Gly-415, and Asp-495 contribute to the ATP site; these read TLGP and DGTTT.

The protein belongs to the chaperonin (HSP60) family. As to quaternary structure, forms a cylinder of 14 subunits composed of two heptameric rings stacked back-to-back. Interacts with the co-chaperonin GroES.

The protein localises to the cytoplasm. It carries out the reaction ATP + H2O + a folded polypeptide = ADP + phosphate + an unfolded polypeptide.. Its function is as follows. Together with its co-chaperonin GroES, plays an essential role in assisting protein folding. The GroEL-GroES system forms a nano-cage that allows encapsulation of the non-native substrate proteins and provides a physical environment optimized to promote and accelerate protein folding. The chain is Chaperonin GroEL 5 from Paraburkholderia xenovorans (strain LB400).